The sequence spans 647 residues: DNA ligase (647 aa).

Residues 30–34, 79–80, and E105 each bind NAD(+); these read DEEYD and SM. K107 serves as the catalytic N6-AMP-lysine intermediate. NAD(+) is bound by residues R128, E162, and K301. C395, C398, C411, and C416 together coordinate Zn(2+). In terms of domain architecture, BRCT spans 570 to 647; that stretch reads KSDGVIFGKT…ESAFNELVKE (78 aa).

This sequence belongs to the NAD-dependent DNA ligase family. LigA subfamily. It depends on Mg(2+) as a cofactor. Mn(2+) is required as a cofactor.

The enzyme catalyses NAD(+) + (deoxyribonucleotide)n-3'-hydroxyl + 5'-phospho-(deoxyribonucleotide)m = (deoxyribonucleotide)n+m + AMP + beta-nicotinamide D-nucleotide.. Its function is as follows. DNA ligase that catalyzes the formation of phosphodiester linkages between 5'-phosphoryl and 3'-hydroxyl groups in double-stranded DNA using NAD as a coenzyme and as the energy source for the reaction. It is essential for DNA replication and repair of damaged DNA. This Campylobacter jejuni subsp. jejuni serotype O:6 (strain 81116 / NCTC 11828) protein is DNA ligase.